A 322-amino-acid polypeptide reads, in one-letter code: Cytochrome f (322 aa).

A signal peptide spans 1 to 37; that stretch reads MQNRKTYAYDWIKKWMIKSISTLIIINTMVWSSVSEA. The heme site is built by Y38, C58, C61, and H62. The helical transmembrane segment at 285–307 threads the bilayer; sequence VLRVQGLLLFFASVILAQIFLVL.

Belongs to the cytochrome f family. The 4 large subunits of the cytochrome b6-f complex are cytochrome b6, subunit IV (17 kDa polypeptide, petD), cytochrome f and the Rieske protein, while the 4 small subunits are PetG, PetL, PetM and PetN. The complex functions as a dimer. The cofactor is heme.

The protein localises to the plastid. It localises to the chloroplast thylakoid membrane. Component of the cytochrome b6-f complex, which mediates electron transfer between photosystem II (PSII) and photosystem I (PSI), cyclic electron flow around PSI, and state transitions. This Anthoceros angustus (Hornwort) protein is Cytochrome f (petA).